A 711-amino-acid chain; its full sequence is Myb-like protein B (711 aa).

The span at 24 to 50 (QPQQSIQQQQQQQQQQQQQQQQQQQQQ) shows a compositional bias: low complexity. Disordered stretches follow at residues 24–70 (QPQQ…SPQL) and 113–235 (NYHT…IINN). Composition is skewed to polar residues over residues 113–139 (NYHTITNSPPHQIHSPQLTIDQHSPPT) and 148–157 (TPLSSSTGFS). 2 stretches are compositionally biased toward low complexity: residues 158-187 (NNNNNNNNNNNNNNNSNSNNNINNNNNNNI) and 198-235 (NNYPNNNNNNNNNNNNNNNNNNNNNNNNNNNNNNIINN). 2 consecutive HTH myb-type domains span residues 428 to 490 (RESI…SPEI) and 491 to 542 (KKGS…SRQT). 2 DNA-binding regions (H-T-H motif) span residues 462–486 (WKKIATKLGGGKTGAQCAQHWKRVL) and 514–538 (WKNVAIEIKTRTDIQCRYQYFKAIM). In terms of domain architecture, Myb-like spans 540–598 (RQTEWNQLEDDILTKKIKLMTQNNEKISFQQVSKHLARAKTTKIPRTALECKSRWSQLN). The tract at residues 598–640 (NSTNVNNNNNNNNNSITTSSSNTNQQQQSTMVTPTSSPLSSPI) is disordered.

It localises to the nucleus. Its function is as follows. Transcriptional activator that initiates multicellular development by induction of adenylyl cyclase expression. This chain is Myb-like protein B (mybB), found in Dictyostelium discoideum (Social amoeba).